Reading from the N-terminus, the 861-residue chain is ToMV resistance protein Tm-2(2) (861 aa).

Residues 63-83 are a coiled coil; sequence VKNLLKDIQELAGDVEDLLDD. Residues 162–388 enclose the NB-ARC domain; the sequence is DDFNMLQAKL…LESMGHKVQD (227 aa). 185–192 contacts ATP; sequence GMPGLGKT. LRR repeat units follow at residues 225–248, 305–327, 388–411, 449–472, 510–536, 585–608, 609–631, 652–680, 689–710, 712–735, 736–758, 784–810, and 811–835; these read LDIAKQIGLTEQKMKENLEDNLRS, LHALQPLESEKSFELFTKKIFNF, DGCAKVLALSYNDLPIASRPCFLY, LAEDVLNDLVSRNLIQLAKRTYNG, VARLRRITFYSDNVMIEFFRSNPKLEK, MTCLRYLRLEGNICGKLPNSIVKL, TRLETIDIDRRSLIQPPSGVWES, ISSFYPNIYSLHPNNLQTLMWIPDKFFEP, LRKLGILGVSNSTVKMLSIFSP, LKALEVLKLSFSSDPSEQIKLSSY, PHIAKLHLNVNRTMALNSQSFPP, LRKLKMFICKYNEEKMDLSGEANGYSF, and PQLEVLHIHSPNGLSEVTCTDDVSM.

It belongs to the disease resistance NB-LRR family. In terms of assembly, (Microbial infection) Interacts with tobamoviruses mouvement protein (e.g. tobacco mosaic virus (TMV) MP, AC P03583) at the plasma membrane; this interaction triggers defense responses leading to programmed cell death. Binds to HSP90 proteins (e.g. HSP90-1 and Nicotiana benthamiana HSP90-1); this interaction seems required for defense responses toward tobamoviruses.

Its subcellular location is the cell membrane. Its function is as follows. Inhibitor of viral mouvements which confers resistance to some tobamoviruses including tomato mosaic virus (ToMV) (e.g. strains L, B7 and ToMV1-2) and tobacco mosaic virus (TMV), but not to resistance-breaking isolates (e.g. LIIA and ToMV2(2)) ToMV and tomato brown rugose fruit virus (ToBRFV). Elicits a hypersensitive reaction in response to avirulent (Avr) movement proteins from resistance inducing tobamoviruses (e.g. ToMV and TMV) strains, thus leading to programmed cell death; this local extreme resistance requires rbcS. The polypeptide is ToMV resistance protein Tm-2(2) (Solanum lycopersicum (Tomato)).